A 184-amino-acid polypeptide reads, in one-letter code: Type-1 fimbrial protein, A chain (184 aa).

A signal peptide spans 1–23 (MKIKTLAIVVLSALSLSSTAALA). C46 and C86 are joined by a disulfide.

It belongs to the fimbrial protein family.

It is found in the fimbrium. Fimbriae (also called pili), polar filaments radiating from the surface of the bacterium to a length of 0.5-1.5 micrometers and numbering 100-300 per cell, enable bacteria to colonize the epithelium of specific host organs. The sequence is that of Type-1 fimbrial protein, A chain from Escherichia coli.